Reading from the N-terminus, the 297-residue chain is 4-hydroxy-tetrahydrodipicolinate synthase (297 aa).

Thr-47 lines the pyruvate pocket. Residue Tyr-136 is the Proton donor/acceptor of the active site. Lys-165 acts as the Schiff-base intermediate with substrate in catalysis. Position 206 (Ile-206) interacts with pyruvate.

Belongs to the DapA family. In terms of assembly, homotetramer; dimer of dimers.

Its subcellular location is the cytoplasm. It catalyses the reaction L-aspartate 4-semialdehyde + pyruvate = (2S,4S)-4-hydroxy-2,3,4,5-tetrahydrodipicolinate + H2O + H(+). It functions in the pathway amino-acid biosynthesis; L-lysine biosynthesis via DAP pathway; (S)-tetrahydrodipicolinate from L-aspartate: step 3/4. Functionally, catalyzes the condensation of (S)-aspartate-beta-semialdehyde [(S)-ASA] and pyruvate to 4-hydroxy-tetrahydrodipicolinate (HTPA). This Campylobacter concisus (strain 13826) protein is 4-hydroxy-tetrahydrodipicolinate synthase.